Here is a 264-residue protein sequence, read N- to C-terminus: Thymidylate synthase (264 aa).

Arg-21 lines the dUMP pocket. His-51 is a (6R)-5,10-methylene-5,6,7,8-tetrahydrofolate binding site. 126-127 (RR) is a binding site for dUMP. The active-site Nucleophile is Cys-146. DUMP contacts are provided by residues 166–169 (RSCD), Asn-177, and 207–209 (HLY). Asp-169 is a binding site for (6R)-5,10-methylene-5,6,7,8-tetrahydrofolate. Ala-263 contributes to the (6R)-5,10-methylene-5,6,7,8-tetrahydrofolate binding site.

This sequence belongs to the thymidylate synthase family. Bacterial-type ThyA subfamily. In terms of assembly, homodimer.

The protein resides in the cytoplasm. The catalysed reaction is dUMP + (6R)-5,10-methylene-5,6,7,8-tetrahydrofolate = 7,8-dihydrofolate + dTMP. Its pathway is pyrimidine metabolism; dTTP biosynthesis. Catalyzes the reductive methylation of 2'-deoxyuridine-5'-monophosphate (dUMP) to 2'-deoxythymidine-5'-monophosphate (dTMP) while utilizing 5,10-methylenetetrahydrofolate (mTHF) as the methyl donor and reductant in the reaction, yielding dihydrofolate (DHF) as a by-product. This enzymatic reaction provides an intracellular de novo source of dTMP, an essential precursor for DNA biosynthesis. This Shewanella baltica (strain OS223) protein is Thymidylate synthase.